The sequence spans 434 residues: Bifunctional protein GlmU (434 aa).

The pyrophosphorylase stretch occupies residues 1-226; sequence MNKNKISIVI…ENEYKGVNSK (226 aa). Residues 11–14, Lys-25, Gln-77, and 84–85 each bind UDP-N-acetyl-alpha-D-glucosamine; these read LAAG and GT. Position 105 (Asp-105) interacts with Mg(2+). 4 residues coordinate UDP-N-acetyl-alpha-D-glucosamine: Gly-138, Glu-152, Asn-167, and Asn-224. Residue Asn-224 participates in Mg(2+) binding. Residues 227 to 247 are linker; sequence KDLSDAEIIMQDKIKNSLMES. The segment at 248 to 434 is N-acetyltransferase; that stretch reads GVTMQLPSTI…DFYYKFFAKK (187 aa). UDP-N-acetyl-alpha-D-glucosamine-binding residues include Arg-311 and Lys-328. His-339 serves as the catalytic Proton acceptor. UDP-N-acetyl-alpha-D-glucosamine-binding residues include Tyr-342 and Asn-353. Acetyl-CoA contacts are provided by residues Ala-356, 362–363, Ser-381, and Ala-399; that span reads NY.

This sequence in the N-terminal section; belongs to the N-acetylglucosamine-1-phosphate uridyltransferase family. In the C-terminal section; belongs to the transferase hexapeptide repeat family. As to quaternary structure, homotrimer. Requires Mg(2+) as cofactor.

It localises to the cytoplasm. It carries out the reaction alpha-D-glucosamine 1-phosphate + acetyl-CoA = N-acetyl-alpha-D-glucosamine 1-phosphate + CoA + H(+). The enzyme catalyses N-acetyl-alpha-D-glucosamine 1-phosphate + UTP + H(+) = UDP-N-acetyl-alpha-D-glucosamine + diphosphate. The protein operates within nucleotide-sugar biosynthesis; UDP-N-acetyl-alpha-D-glucosamine biosynthesis; N-acetyl-alpha-D-glucosamine 1-phosphate from alpha-D-glucosamine 6-phosphate (route II): step 2/2. It participates in nucleotide-sugar biosynthesis; UDP-N-acetyl-alpha-D-glucosamine biosynthesis; UDP-N-acetyl-alpha-D-glucosamine from N-acetyl-alpha-D-glucosamine 1-phosphate: step 1/1. It functions in the pathway bacterial outer membrane biogenesis; LPS lipid A biosynthesis. In terms of biological role, catalyzes the last two sequential reactions in the de novo biosynthetic pathway for UDP-N-acetylglucosamine (UDP-GlcNAc). The C-terminal domain catalyzes the transfer of acetyl group from acetyl coenzyme A to glucosamine-1-phosphate (GlcN-1-P) to produce N-acetylglucosamine-1-phosphate (GlcNAc-1-P), which is converted into UDP-GlcNAc by the transfer of uridine 5-monophosphate (from uridine 5-triphosphate), a reaction catalyzed by the N-terminal domain. This chain is Bifunctional protein GlmU, found in Sulfurimonas denitrificans (strain ATCC 33889 / DSM 1251) (Thiomicrospira denitrificans (strain ATCC 33889 / DSM 1251)).